A 485-amino-acid polypeptide reads, in one-letter code: Protein nucleotidyltransferase YdiU (485 aa).

Residues Gly-85, Gly-87, Arg-88, Lys-108, Asp-120, Gly-121, Arg-171, and Arg-178 each coordinate ATP. Residue Asp-249 is the Proton acceptor of the active site. 2 residues coordinate Mg(2+): Asn-250 and Asp-259. Asp-259 serves as a coordination point for ATP. The interval 462–485 (LPTTPNYQDPPADGDRSYQTFCGT) is disordered.

Belongs to the SELO family. Requires Mg(2+) as cofactor. It depends on Mn(2+) as a cofactor.

It carries out the reaction L-seryl-[protein] + ATP = 3-O-(5'-adenylyl)-L-seryl-[protein] + diphosphate. The catalysed reaction is L-threonyl-[protein] + ATP = 3-O-(5'-adenylyl)-L-threonyl-[protein] + diphosphate. The enzyme catalyses L-tyrosyl-[protein] + ATP = O-(5'-adenylyl)-L-tyrosyl-[protein] + diphosphate. It catalyses the reaction L-histidyl-[protein] + UTP = N(tele)-(5'-uridylyl)-L-histidyl-[protein] + diphosphate. It carries out the reaction L-seryl-[protein] + UTP = O-(5'-uridylyl)-L-seryl-[protein] + diphosphate. The catalysed reaction is L-tyrosyl-[protein] + UTP = O-(5'-uridylyl)-L-tyrosyl-[protein] + diphosphate. In terms of biological role, nucleotidyltransferase involved in the post-translational modification of proteins. It can catalyze the addition of adenosine monophosphate (AMP) or uridine monophosphate (UMP) to a protein, resulting in modifications known as AMPylation and UMPylation. This Teredinibacter turnerae (strain ATCC 39867 / T7901) protein is Protein nucleotidyltransferase YdiU.